We begin with the raw amino-acid sequence, 258 residues long: Phosphoribosylaminoimidazole-succinocarboxamide synthase (258 aa).

Belongs to the SAICAR synthetase family.

The catalysed reaction is 5-amino-1-(5-phospho-D-ribosyl)imidazole-4-carboxylate + L-aspartate + ATP = (2S)-2-[5-amino-1-(5-phospho-beta-D-ribosyl)imidazole-4-carboxamido]succinate + ADP + phosphate + 2 H(+). It functions in the pathway purine metabolism; IMP biosynthesis via de novo pathway; 5-amino-1-(5-phospho-D-ribosyl)imidazole-4-carboxamide from 5-amino-1-(5-phospho-D-ribosyl)imidazole-4-carboxylate: step 1/2. The chain is Phosphoribosylaminoimidazole-succinocarboxamide synthase from Maricaulis maris (strain MCS10) (Caulobacter maris).